We begin with the raw amino-acid sequence, 216 residues long: Probable nicotinate-nucleotide adenylyltransferase (216 aa).

This sequence belongs to the NadD family.

It carries out the reaction nicotinate beta-D-ribonucleotide + ATP + H(+) = deamido-NAD(+) + diphosphate. The protein operates within cofactor biosynthesis; NAD(+) biosynthesis; deamido-NAD(+) from nicotinate D-ribonucleotide: step 1/1. Catalyzes the reversible adenylation of nicotinate mononucleotide (NaMN) to nicotinic acid adenine dinucleotide (NaAD). The polypeptide is Probable nicotinate-nucleotide adenylyltransferase (Shewanella baltica (strain OS185)).